The following is a 152-amino-acid chain: Small ribosomal subunit protein uS15 (152 aa).

Belongs to the universal ribosomal protein uS15 family. As to quaternary structure, part of the 30S ribosomal subunit.

The protein is Small ribosomal subunit protein uS15 of Methanospirillum hungatei JF-1 (strain ATCC 27890 / DSM 864 / NBRC 100397 / JF-1).